The sequence spans 428 residues: 3-phosphoshikimate 1-carboxyvinyltransferase (428 aa).

The 3-phosphoshikimate site is built by K21, S22, and R26. Residue K21 participates in phosphoenolpyruvate binding. Phosphoenolpyruvate-binding residues include G93 and R121. Positions 166, 168, 314, and 341 each coordinate 3-phosphoshikimate. Q168 contributes to the phosphoenolpyruvate binding site. D314 (proton acceptor) is an active-site residue. Phosphoenolpyruvate-binding residues include R345 and R388.

It belongs to the EPSP synthase family. Monomer.

The protein localises to the cytoplasm. The catalysed reaction is 3-phosphoshikimate + phosphoenolpyruvate = 5-O-(1-carboxyvinyl)-3-phosphoshikimate + phosphate. The protein operates within metabolic intermediate biosynthesis; chorismate biosynthesis; chorismate from D-erythrose 4-phosphate and phosphoenolpyruvate: step 6/7. Catalyzes the transfer of the enolpyruvyl moiety of phosphoenolpyruvate (PEP) to the 5-hydroxyl of shikimate-3-phosphate (S3P) to produce enolpyruvyl shikimate-3-phosphate and inorganic phosphate. The sequence is that of 3-phosphoshikimate 1-carboxyvinyltransferase from Syntrophomonas wolfei subsp. wolfei (strain DSM 2245B / Goettingen).